A 493-amino-acid polypeptide reads, in one-letter code: MTKRDYQNDTTAESRPTKKSKGEKKVKETKEKKEKKVKSYVQNPSLDTLPQAEIDEFLASNSIKITDTLPDATPLRPIISFSHLPECNSNLYEQLNSFKSPTSIQSATWPLLFGGRDVIGIAETGSGKTLAFGLPCLKKIEDSKKKKSKPYQPMAVIISPTRELAMQIHDQLQKFAGPVGAKVACIFGGVRKDEQREVLKTANIVVATPGRLKDLQNDGSVDLGKVRYLVLDEADRMLDKGFEQDIKDIIQPMPVSKRQTVMFTATWPPVVRELASTFMSSPVTVTIGGDPSADPRANTRIKQVVEVVKPHEKEGRLVQLLKQHQRGAEKVLAFCLYKKEATRIERFLQSRGFKVAGIHGDLSQQERFRSLDAFKTGAATVLVATDVAARGLDIPAVKLVINVTFPLTVEDYVHRIGRTGRAGAEGHAITLFTETDKAQSGALINVLKAAGQEVPEELLKFGGTVKKKQHDAYGAFFKDVDTTKAATKIVFDD.

The disordered stretch occupies residues 1-38 (MTKRDYQNDTTAESRPTKKSKGEKKVKETKEKKEKKVK). A compositionally biased stretch (basic and acidic residues) spans 23 to 34 (EKKVKETKEKKE). The short motif at 97–105 (SFKSPTSIQ) is the Q motif element. One can recognise a Helicase ATP-binding domain in the interval 109–285 (WPLLFGGRDV…STFMSSPVTV (177 aa)). 122 to 129 (AETGSGKT) serves as a coordination point for ATP. The DEAD box signature appears at 232 to 235 (DEAD). One can recognise a Helicase C-terminal domain in the interval 316–462 (RLVQLLKQHQ…EVPEELLKFG (147 aa)).

It belongs to the DEAD box helicase family. DDX5/DBP2 subfamily.

It localises to the nucleus. Its subcellular location is the nucleolus. The catalysed reaction is ATP + H2O = ADP + phosphate + H(+). ATP-dependent RNA helicase required for 60S ribosomal subunit synthesis. Involved in efficient pre-rRNA processing, predominantly at site A3, which is necessary for the normal formation of 25S and 5.8S rRNAs. This chain is ATP-dependent RNA helicase dbp3 (dbp3), found in Aspergillus terreus (strain NIH 2624 / FGSC A1156).